A 225-amino-acid polypeptide reads, in one-letter code: Cytidylate kinase (225 aa).

11–19 (GPAGAGKGT) provides a ligand contact to ATP. Positions 169–185 (MDRIKSRIEERDARDQS) are enriched in basic and acidic residues. The tract at residues 169 to 195 (MDRIKSRIEERDARDQSRATAPLAAAP) is disordered.

The protein belongs to the cytidylate kinase family. Type 1 subfamily.

The protein resides in the cytoplasm. It carries out the reaction CMP + ATP = CDP + ADP. The catalysed reaction is dCMP + ATP = dCDP + ADP. This chain is Cytidylate kinase, found in Magnetococcus marinus (strain ATCC BAA-1437 / JCM 17883 / MC-1).